A 198-amino-acid chain; its full sequence is Photosystem I assembly protein Ycf4 (198 aa).

2 helical membrane passes run 35-57 and 70-92; these read WFYNIVMLLGGIGFLIVGISSYI and IIFFPQGITMCFYGTCGILFSIN.

It belongs to the Ycf4 family.

It localises to the plastid. The protein resides in the chloroplast thylakoid membrane. In terms of biological role, seems to be required for the assembly of the photosystem I complex. In Euglena gracilis, this protein is Photosystem I assembly protein Ycf4.